The following is a 1009-amino-acid chain: Probable beta-galactosidase B (1009 aa).

A signal peptide spans 1–27 (MKTIAGLSWISALSSLASLPNGLGVSA). Substrate is bound at residue Y96. Residue N106 is glycosylated (N-linked (GlcNAc...) asparagine). The substrate site is built by N141, A142, E143, and N201. Residue E202 is the Proton donor of the active site. Y271 is a substrate binding site. C277 and C330 are oxidised to a cystine. The active-site Nucleophile is E314. Position 379 (Y379) interacts with substrate. N467, N495, N547, N593, N632, N672, N707, N775, N782, N789, N795, and N914 each carry an N-linked (GlcNAc...) asparagine glycan.

This sequence belongs to the glycosyl hydrolase 35 family.

It localises to the secreted. It carries out the reaction Hydrolysis of terminal non-reducing beta-D-galactose residues in beta-D-galactosides.. Its function is as follows. Cleaves beta-linked terminal galactosyl residues from gangliosides, glycoproteins, and glycosaminoglycans. This chain is Probable beta-galactosidase B (lacB), found in Pyrenophora tritici-repentis (strain Pt-1C-BFP) (Wheat tan spot fungus).